A 336-amino-acid polypeptide reads, in one-letter code: 7,8-didemethyl-8-hydroxy-5-deazariboflavin synthase (336 aa).

One can recognise a Radical SAM core domain in the interval 18-249; that stretch reads ITYSPAYTLV…TSIAIQVPPN (232 aa). Cys32, Cys36, and Cys39 together coordinate [4Fe-4S] cluster.

Belongs to the radical SAM superfamily. CofG family. As to quaternary structure, consists of two subunits, CofG and CofH. Requires [4Fe-4S] cluster as cofactor.

The catalysed reaction is 5-amino-5-(4-hydroxybenzyl)-6-(D-ribitylimino)-5,6-dihydrouracil + S-adenosyl-L-methionine = 7,8-didemethyl-8-hydroxy-5-deazariboflavin + 5'-deoxyadenosine + L-methionine + NH4(+) + H(+). Its pathway is cofactor biosynthesis; coenzyme F0 biosynthesis. Its function is as follows. Catalyzes the radical-mediated synthesis of 7,8-didemethyl-8-hydroxy-5-deazariboflavin from 5-amino-5-(4-hydroxybenzyl)-6-(D-ribitylimino)-5,6-dihydrouracil. This chain is 7,8-didemethyl-8-hydroxy-5-deazariboflavin synthase, found in Synechococcus elongatus (strain ATCC 33912 / PCC 7942 / FACHB-805) (Anacystis nidulans R2).